A 142-amino-acid chain; its full sequence is Putative pre-16S rRNA nuclease (142 aa).

The protein belongs to the YqgF nuclease family.

It localises to the cytoplasm. In terms of biological role, could be a nuclease involved in processing of the 5'-end of pre-16S rRNA. The chain is Putative pre-16S rRNA nuclease from Lawsonia intracellularis (strain PHE/MN1-00).